The primary structure comprises 311 residues: Protoheme IX farnesyltransferase 1 (311 aa).

9 consecutive transmembrane segments (helical) span residues 31-51 (VMALAVFTAFVGLMVAPGAVN), 52-72 (PVIAVIAIAAIAIGAGAAGAL), 97-117 (VTPGEALGFGLVLSALSVMTL), 119-139 (VLVGWLAASLLAFTIFFYIVI), 152-172 (IVIGGAAGALPPVIGWAAATG), 179-199 (LVLFLIIFLWTPPHFWALALF), 225-245 (ILAYALLLAPVGVLPWAFGFT), 247-267 (GYYGIASAALGVGFIWHSWKV), and 281-301 (LFAYSIVYLFAVFAALLADTI).

Belongs to the UbiA prenyltransferase family. Protoheme IX farnesyltransferase subfamily.

It is found in the cell inner membrane. The catalysed reaction is heme b + (2E,6E)-farnesyl diphosphate + H2O = Fe(II)-heme o + diphosphate. The protein operates within porphyrin-containing compound metabolism; heme O biosynthesis; heme O from protoheme: step 1/1. Functionally, converts heme B (protoheme IX) to heme O by substitution of the vinyl group on carbon 2 of heme B porphyrin ring with a hydroxyethyl farnesyl side group. This Mesorhizobium japonicum (strain LMG 29417 / CECT 9101 / MAFF 303099) (Mesorhizobium loti (strain MAFF 303099)) protein is Protoheme IX farnesyltransferase 1.